Here is a 467-residue protein sequence, read N- to C-terminus: Metal transporter cnnm-4 (467 aa).

The Extracellular segment spans residues 1–110 (MELYAAGRYD…EIPEGKDKTR (110 aa)). Residue asparagine 61 is glycosylated (N-linked (GlcNAc...) asparagine). The CNNM transmembrane domain maps to 107-293 (DKTRVYFMMP…LEDEEAADGN (187 aa)). The helical transmembrane segment at 111 to 131 (VYFMMPLLVLCLGLSATFSGL) threads the bilayer. The Cytoplasmic portion of the chain corresponds to 132 to 170 (NLAIMSFSINDLKLIQESDSDKLMKQRAMDVMRLRRNSN). Residues 171 to 191 (FVLVTIIFGNCFCNISITLLM) traverse the membrane as a helical segment. Over 192 to 196 (NYFAE) the chain is Extracellular. Residues 197–217 (FYGFGGFIFVELISTALLLIF) traverse the membrane as a helical segment. At 218–238 (TEILPSLIFTKNALAIASRLQ) the chain is on the cytoplasmic side. A helical transmembrane segment spans residues 239 to 259 (YFVIFTMCITSPISYPLAMLL). The Extracellular portion of the chain corresponds to 260–467 (NIILGKENAD…IFDEKDARQE (208 aa)). CBS domains lie at 317 to 381 (MTEI…GSDT) and 394 to 461 (KRRK…IFDE). A glycan (N-linked (GlcNAc...) asparagine) is linked at asparagine 364.

It belongs to the ACDP family.

Its subcellular location is the cell membrane. Its function is as follows. Probable metal transporter. Probably acts redundantly with the other metal transport proteins cnnm-1, cnnm-2, cnnm-3 and cnnm-5 to regulate Mg(2+) homeostasis. This is Metal transporter cnnm-4 from Caenorhabditis elegans.